The primary structure comprises 2055 residues: Multiple PDZ domain protein (2055 aa).

Positions 1 to 63 (MLETIDKNRA…SLQQLKDQVN (63 aa)) constitute an L27 domain. One can recognise a PDZ 1 domain in the interval 138–225 (IFELLKPPCG…TVQLVIARGS (88 aa)). At Ser231 the chain carries Phosphoserine. The 81-residue stretch at 258 to 338 (TIELVNDGSG…RVKLMIARGA (81 aa)) folds into the PDZ 2 domain. The span at 348–360 (LGITLSSSTSSTS) shows a compositional bias: low complexity. The tract at residues 348-372 (LGITLSSSTSSTSEMRVDASTQKND) is disordered. 3 PDZ domains span residues 378–464 (DVEL…MRKG), 546–627 (VAHV…CRRT), and 693–779 (SIEL…VAKP). Residues Ser783 and Ser1066 each carry the phosphoserine modification. The PDZ 6 domain occupies 996–1077 (TVTIAKGSSS…IGPDIKITYV (82 aa)). A disordered region spans residues 1111 to 1130 (PELPEREEGEGEESELQNAA). In terms of domain architecture, PDZ 7 spans 1139–1231 (RVELWREPSK…PVVFMVQSII (93 aa)). Arg1158 is subject to Omega-N-methylarginine. A compositionally biased stretch (polar residues) spans 1264 to 1274 (LTTDQAPSQSE). A disordered region spans residues 1264-1299 (LTTDQAPSQSESETEKPALCNVPPSSPSVFSEMGSD). The PDZ 8 domain maps to 1338-1421 (VIELEKGQSG…KVKIIFIRNA (84 aa)). Residues 1435-1445 (ADSPSSTSDSP) show a composition bias toward low complexity. The segment at 1435–1459 (ADSPSSTSDSPQNKEVEPCSTTSAS) is disordered. In terms of domain architecture, PDZ 9 spans 1471 to 1552 (QLELPKDQGG…TVKLTVRAEN (82 aa)). The tract at residues 1557-1597 (AVPSSAVTVSGERKDNSQTPAVPAPDLEPIPSTSRSSTPAV) is disordered. 2 consecutive PDZ domains span residues 1614–1697 (TIEI…YRDE) and 1710–1792 (TIEL…GRVK). The disordered stretch occupies residues 1795-1834 (PFHSERRPSQSSQVSESSLSSFTPPLSGINTSESLESNSK). Phosphoserine is present on residues Ser1803 and Ser1809. The span at 1803 to 1815 (SQSSQVSESSLSS) shows a compositional bias: low complexity. Over residues 1816–1834 (FTPPLSGINTSESLESNSK) the composition is skewed to polar residues. 2 consecutive PDZ domains span residues 1847–1933 (TVEI…VAGG) and 1972–2055 (TITL…MVLS).

In terms of assembly, interacts with CLDN5, DLG4, GRIN1, SYNGAP1, CAMK2A and CAMK2B, HTR2A, HTR2B, HTR2C, PLEKHA1/TAPP1 and PLEKHA2/TAPP2. Interacts with F11R/JAM, CLDN1, NG2, CXADR, CRB1, MPP4 and PALS1. Interacts with FAT4 (via cytoplasmic domain). Interacts with DLL1. In terms of tissue distribution, in the brain, it is strongly expressed in the choroid plexus. Within the hippocampal formation, strongest expression was seen in the soma of CA1-4 pyramidal cells. Expressed in most neocortical regions with the strongest expression in piriform cortex and amygdaloid nuclei but also detected in the subiculum and olfactory bulb. In the cerebellum, the highest level of expression was found in Purkinje cells. Moderately expressed in the granular layer and molecular layer. Expressed in the pontine nuclei, parts of spinal trigeminal nuclei, and the principal sensory trigeminal nuclei of the metencephalon. Expressed in all thalamic and hypothalamic nuclei, and the substantia nigra (at protein level). Ubiquitously expressed.

The protein resides in the cell membrane. Its subcellular location is the apical cell membrane. It localises to the postsynaptic density. The protein localises to the cell projection. It is found in the dendrite. The protein resides in the cell junction. Its subcellular location is the tight junction. It localises to the synapse. The protein localises to the synaptosome. In terms of biological role, member of the NMDAR signaling complex that may play a role in control of AMPAR potentiation and synaptic plasticity in excitatory synapses. Promotes clustering of HT2RC at the cell surface. In Mus musculus (Mouse), this protein is Multiple PDZ domain protein (Mpdz).